Here is a 126-residue protein sequence, read N- to C-terminus: Large ribosomal subunit protein bL17c (126 aa).

A chloroplast-targeting transit peptide spans 1–10; that stretch reads MIDNGGRFFA.

Component of the chloroplast large ribosomal subunit (LSU). Mature 70S chloroplast ribosomes of higher plants consist of a small (30S) and a large (50S) subunit. The 30S small subunit contains 1 molecule of ribosomal RNA (16S rRNA) and 24 different proteins. The 50S large subunit contains 3 rRNA molecules (23S, 5S and 4.5S rRNA) and 33 different proteins.

It localises to the plastid. It is found in the chloroplast. Functionally, component of the chloroplast ribosome (chloro-ribosome), a dedicated translation machinery responsible for the synthesis of chloroplast genome-encoded proteins, including proteins of the transcription and translation machinery and components of the photosynthetic apparatus. The sequence is that of Large ribosomal subunit protein bL17c (RPL17) from Spinacia oleracea (Spinach).